Consider the following 289-residue polypeptide: Leucine--tRNA ligase subunit beta (289 aa).

The 'KMSKS' region motif lies at 45-49 (KMSKS). Lys-48 provides a ligand contact to ATP.

It belongs to the class-I aminoacyl-tRNA synthetase family. Seems to consist of an alpha chain and a beta chain.

The protein resides in the cytoplasm. The catalysed reaction is tRNA(Leu) + L-leucine + ATP = L-leucyl-tRNA(Leu) + AMP + diphosphate. This is Leucine--tRNA ligase subunit beta (leuS') from Aquifex aeolicus (strain VF5).